The sequence spans 182 residues: Adenylate kinase (182 aa).

Residue 12–17 (GAGKGT) participates in ATP binding. The interval 32-61 (STGDLLRDEVSSGSVLGIKAAEIMNKGELV) is NMP. Residues Thr-33, Arg-38, 59-61 (ELV), 85-88 (GFPR), and Gln-92 each bind AMP. Residues 126-132 (ERGRQDD) are LID. Arg-127 contacts ATP. AMP contacts are provided by Arg-129 and Arg-140. Position 168 (Ala-168) interacts with ATP.

The protein belongs to the adenylate kinase family. As to quaternary structure, monomer.

The protein localises to the cytoplasm. It catalyses the reaction AMP + ATP = 2 ADP. It participates in purine metabolism; AMP biosynthesis via salvage pathway; AMP from ADP: step 1/1. In terms of biological role, catalyzes the reversible transfer of the terminal phosphate group between ATP and AMP. Plays an important role in cellular energy homeostasis and in adenine nucleotide metabolism. The sequence is that of Adenylate kinase from Prochlorococcus marinus (strain NATL1A).